Here is a 180-residue protein sequence, read N- to C-terminus: Dual-action ribosomal maturation protein DarP (180 aa).

It belongs to the DarP family.

It localises to the cytoplasm. Functionally, member of a network of 50S ribosomal subunit biogenesis factors which assembles along the 30S-50S interface, preventing incorrect 23S rRNA structures from forming. Promotes peptidyl transferase center (PTC) maturation. This chain is Dual-action ribosomal maturation protein DarP, found in Chromobacterium violaceum (strain ATCC 12472 / DSM 30191 / JCM 1249 / CCUG 213 / NBRC 12614 / NCIMB 9131 / NCTC 9757 / MK).